The chain runs to 342 residues: S-adenosylmethionine:tRNA ribosyltransferase-isomerase (342 aa).

It belongs to the QueA family. As to quaternary structure, monomer.

It is found in the cytoplasm. It catalyses the reaction 7-aminomethyl-7-carbaguanosine(34) in tRNA + S-adenosyl-L-methionine = epoxyqueuosine(34) in tRNA + adenine + L-methionine + 2 H(+). Its pathway is tRNA modification; tRNA-queuosine biosynthesis. Its function is as follows. Transfers and isomerizes the ribose moiety from AdoMet to the 7-aminomethyl group of 7-deazaguanine (preQ1-tRNA) to give epoxyqueuosine (oQ-tRNA). In Listeria monocytogenes serotype 4b (strain CLIP80459), this protein is S-adenosylmethionine:tRNA ribosyltransferase-isomerase.